The following is a 207-amino-acid chain: Superoxide dismutase [Mn] (207 aa).

Residues H28, H76, D160, and H164 each coordinate Mn(2+).

It belongs to the iron/manganese superoxide dismutase family. Mn(2+) is required as a cofactor.

It is found in the secreted. It carries out the reaction 2 superoxide + 2 H(+) = H2O2 + O2. Its function is as follows. Destroys superoxide anion radicals which are normally produced within the cells and which are toxic to biological systems. In Mycolicibacterium paratuberculosis (strain ATCC BAA-968 / K-10) (Mycobacterium paratuberculosis), this protein is Superoxide dismutase [Mn] (sodA).